Consider the following 259-residue polypeptide: TCF3 fusion partner homolog (259 aa).

2 disordered regions span residues 51 to 72 (GLGDSGLRERDEEEEAARGRRR) and 141 to 210 (EDDG…APVQ). Serine 167 carries the phosphoserine modification. Threonine 172 is modified (phosphothreonine). A phosphoserine mark is found at serine 180 and serine 188. Position 203 is a phosphothreonine (threonine 203). A Glycyl lysine isopeptide (Lys-Gly) (interchain with G-Cter in SUMO2) cross-link involves residue lysine 222. The tract at residues 240-259 (VSRGPDKLLPYPTLASPPFD) is disordered. Phosphoserine is present on serine 255.

In terms of assembly, interacts with NOL3; translocates NOL3 into the nucleus and negatively regulated TFPT-induced cell death. Component of the chromatin remodeling INO80 complex; specifically part of a complex module associated with the N-terminus of INO80. Ubiquitously expressed. Abundant in the brain.

The protein localises to the nucleus. Appears to promote apoptosis in a p53/TP53-independent manner. Its function is as follows. Putative regulatory component of the chromatin remodeling INO80 complex which is involved in transcriptional regulation, DNA replication and probably DNA repair. This Rattus norvegicus (Rat) protein is TCF3 fusion partner homolog (Tfpt).